The chain runs to 115 residues: MASPPAQERPDVPLHGGFTRFELELEFVQCLANPVYLNYLATQKYFDKPEFVAYLDYLQYFAEPKYIKFLHHPGPTLRALELLQQERFRQDIITPGLANKLQIEGQRNAVPSQKD.

The protein belongs to the Mediator complex subunit 31 family. Component of the Mediator complex.

It localises to the nucleus. In terms of biological role, component of the Mediator complex, a coactivator involved in the regulated transcription of nearly all RNA polymerase II-dependent genes. Mediator functions as a bridge to convey information from gene-specific regulatory proteins to the basal RNA polymerase II transcription machinery. Mediator is recruited to promoters by direct interactions with regulatory proteins and serves as a scaffold for the assembly of a functional preinitiation complex with RNA polymerase II and the general transcription factors. This Phaeosphaeria nodorum (strain SN15 / ATCC MYA-4574 / FGSC 10173) (Glume blotch fungus) protein is Mediator of RNA polymerase II transcription subunit 31 (SOH1).